We begin with the raw amino-acid sequence, 636 residues long: Interleukin-27 receptor subunit alpha (636 aa).

Positions 1-32 are cleaved as a signal peptide; the sequence is MRGGRGAPFWLWPLPKLALLPLLWVLFQRTRP. Over 33 to 516 the chain is Extracellular; the sequence is QGSAGPLQCY…HLPDNTLRWK (484 aa). Residues Asn-51 and Asn-76 are each glycosylated (N-linked (GlcNAc...) asparagine). In terms of domain architecture, Fibronectin type-III 1 spans 131–231; it reads PRLGPDVDFS…PILSFQTPPS (101 aa). The short motif at 217–221 is the WSXWS motif element; that stretch reads WGEWS. Asn-302, Asn-311, Asn-374, Asn-382, and Asn-467 each carry an N-linked (GlcNAc...) asparagine glycan. 2 Fibronectin type-III domains span residues 322 to 417 and 419 to 511; these read APRS…LAPL and GPTL…LPDN. The chain crosses the membrane as a helical span at residues 517 to 537; sequence VLPGILFLWGLFLLGCGLSLA. Residues 538–636 lie on the Cytoplasmic side of the membrane; that stretch reads TSGRCYHLRH…LGPPRPQVLA (99 aa). Residues 554–562 carry the Box 1 motif motif; that stretch reads VWEKVPDPA. The tract at residues 587–636 is disordered; that stretch reads EVEEMEPPPVMESSQPAQATAPLDSGYEKHFLPTPEELGLLGPPRPQVLA. Low complexity predominate over residues 618–628; the sequence is LPTPEELGLLG.

Belongs to the type I cytokine receptor family. Type 2 subfamily. In terms of assembly, component of a receptor complex composed of IL6ST/GP130, IL27RA/WSX1 and CNTFR which interacts with the neuroprotective peptide humanin. Highly expressed in lymphoid tissues such as spleen, lymph nodes and peripheral blood leukocytes. Weakly expressed in other tissues examined including heart, brain, fetal and adult lung, liver, skeletal muscle, kidney, pancreas, prostate, testis, ovary, small intestine, kidney and colon. In the lymphoid system, higher level expression in CD4+ T-cell subsets than in CD8+ T-cell subsets. Also weaker expression in CD19+ B-cells and monocytes.

The protein resides in the membrane. Functionally, receptor for IL27. Requires IL6ST/GP130 to mediate signal transduction in response to IL27. This signaling system acts through STAT3 and STAT1. Acts as a receptor for the neuroprotective peptide humanin as part of a complex with IL6ST/GP130 and CNTFR. Involved in the regulation of Th1-type immune responses. Also appears to be involved in innate defense mechanisms. This Homo sapiens (Human) protein is Interleukin-27 receptor subunit alpha (IL27RA).